The following is an 832-amino-acid chain: Beta-galactosidase (832 aa).

The N-terminal stretch at 1–25 is a signal peptide; that stretch reads MALKLVLMLMVALLAAVWSPPAVTA. Residue Glu-183 is the Proton donor of the active site. Glu-252 (nucleophile) is an active-site residue. The region spanning 741–832 is the SUEL-type lectin domain; the sequence is AYGRPKVHLS…KKLAVEAICE (92 aa).

Belongs to the glycosyl hydrolase 35 family.

The protein localises to the secreted. It is found in the extracellular space. It localises to the apoplast. It catalyses the reaction Hydrolysis of terminal non-reducing beta-D-galactose residues in beta-D-galactosides.. The polypeptide is Beta-galactosidase (Asparagus officinalis (Garden asparagus)).